A 124-amino-acid chain; its full sequence is Small ribosomal subunit protein uS12c (124 aa).

This sequence belongs to the universal ribosomal protein uS12 family. Part of the 30S ribosomal subunit.

Its subcellular location is the plastid. The protein resides in the chloroplast. In terms of biological role, with S4 and S5 plays an important role in translational accuracy. Located at the interface of the 30S and 50S subunits. This is Small ribosomal subunit protein uS12c (rps12) from Ostreococcus tauri.